Here is a 509-residue protein sequence, read N- to C-terminus: Citrinin biosynthesis transcriptional activator mrl3 (509 aa).

The interval 1–22 is disordered; sequence MASTAHRQPSRPTTRQRQRTGR. Residues 24–51 constitute a DNA-binding region (zn(2)-C6 fungal-type); the sequence is CEECRRRKLRCDGQQPRCGVCVDSGVTC. The disordered stretch occupies residues 97–143; that stretch reads STPLTNDHHDGCSVSSASSRSDSNPPPTVSEPDMSLPNTTTSVSSAP. The segment covering 109–119 has biased composition (low complexity); the sequence is SVSSASSRSDS. Positions 132 to 143 are enriched in polar residues; the sequence is LPNTTTSVSSAP.

It localises to the nucleus. Its function is as follows. Transcription factor that regulates the expression of the gene cluster that mediates the biosynthesis of the mycotoxin citrinin, a hepato-nephrotoxic compound to humans due to inhibition of respiration complex III. In Monascus ruber (Mold), this protein is Citrinin biosynthesis transcriptional activator mrl3.